A 252-amino-acid polypeptide reads, in one-letter code: Probable transcriptional regulatory protein RT0442 (252 aa).

Positions 1-22 are disordered; the sequence is MSGHSKFKNIQHRKGAQDKKKS.

Belongs to the TACO1 family.

It is found in the cytoplasm. This is Probable transcriptional regulatory protein RT0442 from Rickettsia typhi (strain ATCC VR-144 / Wilmington).